Consider the following 201-residue polypeptide: ADP-ribosylation factor-related protein 1 (201 aa).

Methionine 1 is modified (N-acetylmethionine). GTP is bound by residues glycine 24–threonine 31, aspartate 75–glutamine 79, and asparagine 134–aspartate 137.

The protein belongs to the small GTPase superfamily. Arf family. As to quaternary structure, interacts with SYS1.

The protein localises to the golgi apparatus. The protein resides in the trans-Golgi network. Its function is as follows. Trans-Golgi-associated GTPase that regulates protein sorting. Controls the targeting of ARL1 and its effector to the trans-Golgi. Required for the lipidation of chylomicrons in the intestine and required for VLDL lipidation in the liver. In Pongo abelii (Sumatran orangutan), this protein is ADP-ribosylation factor-related protein 1 (ARFRP1).